The chain runs to 588 residues: Nuclear hormone receptor family member nhr-23 (588 aa).

Positions leucine 50–serine 73 are disordered. A compositionally biased stretch (polar residues) spans alanine 52–threonine 64. The nuclear receptor DNA-binding region spans valine 160–phenylalanine 235. 2 consecutive NR C4-type zinc fingers follow at residues cysteine 163–cysteine 183 and cysteine 199–cysteine 223. Residues proline 345–aspartate 586 form the NR LBD domain.

It belongs to the nuclear hormone receptor family. NR1 subfamily. Expressed in the germline and oocytes and is a maternal gene product. In males and sperm-producing hermaphrodites, expressed in early pachytene spermatocytes, increasing in level throughout late pachytene. Expression is undetectable in meiotically dividing spermatocytes or mature spermatids.

It localises to the nucleus. Orphan nuclear receptor. Transcription factor. Modulates expression of target genes, such as Period protein homolog lin-42 and microRNA let-7, by binding to hormone response elements (HRE). Involved in promoting oscillatory expression of the primary transcripts of let-7 and paralogous microRNAs miR-48, miR-84, and miR-241. Plays a role in normal development and required to regulate each larval molt. Involved in regulating both the frequency and number of molts, acting as part of a negative feedback loop with the let-7 family of microRNAs, perhaps contributing to a self-sustaining molecular-genetic oscillator. Positively modulates expression of collagen and hedgehog-related genes. Involved in development of the gonad and associated epidermal structures. Required in spermatogenesis, acting following the sperm/oocyte cell fate decision, downstream of the canonical sex-determination pathway. Involved in regulating formation of the sperm-specific fibrous body-membranous organelle (FB-MO) complexes, acting independently of transcription regulator spe-44. The chain is Nuclear hormone receptor family member nhr-23 from Caenorhabditis elegans.